Here is a 92-residue protein sequence, read N- to C-terminus: Integration host factor subunit beta (92 aa).

It belongs to the bacterial histone-like protein family. Heterodimer of an alpha and a beta chain.

In terms of biological role, this protein is one of the two subunits of integration host factor, a specific DNA-binding protein that functions in genetic recombination as well as in transcriptional and translational control. In Azotobacter vinelandii (strain DJ / ATCC BAA-1303), this protein is Integration host factor subunit beta.